A 29-amino-acid polypeptide reads, in one-letter code: Bacteriocin (29 aa).

The protein localises to the secreted. Functionally, has antibacterial activity against strains of L.monocytogenes, L.lactis, B.subtilis, S.typhi, S.aureus, C.perfringens, E.aerogenes and M.luteus but not against E.coli, S.sonnei, S.pneumoniae, S.faecalis, P.aeruginosa, K.pneumoniae or P.vulgaris. The polypeptide is Bacteriocin (Lactococcus lactis subsp. lactis (Streptococcus lactis)).